The following is a 211-amino-acid chain: Small ribosomal subunit protein uS5 (211 aa).

One can recognise an S5 DRBM domain in the interval 50 to 113; it reads LEDEVLDINM…DNAKINITRI (64 aa).

The protein belongs to the universal ribosomal protein uS5 family. As to quaternary structure, part of the 30S ribosomal subunit. Contacts protein S4.

In terms of biological role, with S4 and S12 plays an important role in translational accuracy. This Methanococcoides burtonii (strain DSM 6242 / NBRC 107633 / OCM 468 / ACE-M) protein is Small ribosomal subunit protein uS5.